A 70-amino-acid polypeptide reads, in one-letter code: ATP synthase subunit c (70 aa).

2 helical membrane-spanning segments follow: residues 5 to 25 and 47 to 67; these read AAAIAIGLAALGAGIGNGLIV and FIGVALVEAIPIIAVVIAFMV.

Belongs to the ATPase C chain family. F-type ATPases have 2 components, F(1) - the catalytic core - and F(0) - the membrane proton channel. F(1) has five subunits: alpha(3), beta(3), gamma(1), delta(1), epsilon(1). F(0) has three main subunits: a(1), b(2) and c(10-14). The alpha and beta chains form an alternating ring which encloses part of the gamma chain. F(1) is attached to F(0) by a central stalk formed by the gamma and epsilon chains, while a peripheral stalk is formed by the delta and b chains.

It localises to the cell membrane. F(1)F(0) ATP synthase produces ATP from ADP in the presence of a proton or sodium gradient. F-type ATPases consist of two structural domains, F(1) containing the extramembraneous catalytic core and F(0) containing the membrane proton channel, linked together by a central stalk and a peripheral stalk. During catalysis, ATP synthesis in the catalytic domain of F(1) is coupled via a rotary mechanism of the central stalk subunits to proton translocation. Functionally, key component of the F(0) channel; it plays a direct role in translocation across the membrane. A homomeric c-ring of between 10-14 subunits forms the central stalk rotor element with the F(1) delta and epsilon subunits. This chain is ATP synthase subunit c, found in Anoxybacillus flavithermus (strain DSM 21510 / WK1).